We begin with the raw amino-acid sequence, 146 residues long: MAGELTPEEEAQYKKAFSAVDTDGNGTINAQELGAALKATGKNLSEAQLRKLISEVDSDGDGEISFQEFLTAAKKARAGLEDLQVAFRAFDQDGDGHITVDELRRAMAGLGQPLPQEELDAMIREADVDQDGRVNYEEFARMLAQE.

A2 is modified (N-acetylalanine). EF-hand domains follow at residues 8–43, 44–74, 78–113, and 114–146; these read EEEAQYKKAFSAVDTDGNGTINAQELGAALKATGKN, LSEAQLRKLISEVDSDGDGEISFQEFLTAAK, AGLEDLQVAFRAFDQDGDGHITVDELRRAMAGLGQP, and LPQEELDAMIREADVDQDGRVNYEEFARMLAQE. D21, D23, N25, T27, E32, D57, D59, D61, E63, E68, D91, D93, D95, H97, E102, D127, D129, D131, R133, and E138 together coordinate Ca(2+).

In terms of assembly, associates with transglutaminase 3. As to expression, particularly abundant in the epidermis where its expression is directly related to keratinocyte differentiation. Very low expression in lung.

Binds calcium. May be involved in terminal differentiation of keratinocytes. This Homo sapiens (Human) protein is Calmodulin-like protein 5 (CALML5).